The sequence spans 159 residues: NADH-quinone oxidoreductase subunit B (159 aa).

4 residues coordinate [4Fe-4S] cluster: Cys37, Cys38, Cys102, and Cys132.

Belongs to the complex I 20 kDa subunit family. NDH-1 is composed of 14 different subunits. Subunits NuoB, C, D, E, F, and G constitute the peripheral sector of the complex. [4Fe-4S] cluster is required as a cofactor.

It is found in the cell inner membrane. It catalyses the reaction a quinone + NADH + 5 H(+)(in) = a quinol + NAD(+) + 4 H(+)(out). Functionally, NDH-1 shuttles electrons from NADH, via FMN and iron-sulfur (Fe-S) centers, to quinones in the respiratory chain. Couples the redox reaction to proton translocation (for every two electrons transferred, four hydrogen ions are translocated across the cytoplasmic membrane), and thus conserves the redox energy in a proton gradient. This chain is NADH-quinone oxidoreductase subunit B, found in Polaromonas naphthalenivorans (strain CJ2).